The sequence spans 855 residues: Suppressor of tumorigenicity 14 protein (855 aa).

The interval 1 to 20 (MGSDRARKGGGGPKDFGAGL) is disordered. Residues 1–55 (MGSDRARKGGGGPKDFGAGLKYNSRHEKVNGLEEGVEFLPVNNVKKVEKHGPGRW) lie on the Cytoplasmic side of the membrane. A helical; Signal-anchor for type II membrane protein membrane pass occupies residues 56–76 (VVLAAVLIGLLLVLLGIGFLV). Over 77 to 855 (WHLQYRDVRV…RDWIKENTGV (779 aa)) the chain is Extracellular. Residues 86 to 203 (VQKVFNGYMR…TSVVAFPTDS (118 aa)) enclose the SEA domain. A glycan (N-linked (GlcNAc...) asparagine) is linked at asparagine 109. Cysteines 214 and 244 form a disulfide. CUB domains lie at 214-334 (CSFG…FFQL) and 340-447 (CGGR…YLSY). Asparagine 302 carries N-linked (GlcNAc...) asparagine glycosylation. Intrachain disulfides connect cysteine 340-cysteine 366, cysteine 397-cysteine 410, cysteine 453-cysteine 464, cysteine 459-cysteine 477, cysteine 471-cysteine 486, cysteine 488-cysteine 501, cysteine 496-cysteine 514, cysteine 508-cysteine 523, cysteine 525-cysteine 537, cysteine 532-cysteine 550, cysteine 544-cysteine 559, cysteine 567-cysteine 579, cysteine 574-cysteine 593, cysteine 587-cysteine 602, and cysteine 641-cysteine 657. LDL-receptor class A domains lie at 452 to 487 (PCPG…LNCS), 487 to 524 (SCDA…QGCS), 524 to 560 (SCPA…ASCP), and 566 to 603 (TCTK…KDCD). Asparagine 485 is a glycosylation site (N-linked (GlcNAc...) asparagine). Residues 615–854 (VVGGTDADEG…FRDWIKENTG (240 aa)) enclose the Peptidase S1 domain. Catalysis depends on charge relay system residues histidine 656 and aspartate 711. N-linked (GlcNAc...) asparagine glycosylation is present at asparagine 772. Intrachain disulfides connect cysteine 776–cysteine 790 and cysteine 801–cysteine 830. The Charge relay system role is filled by serine 805.

This sequence belongs to the peptidase S1 family. In terms of assembly, interacts with CDCP1. May interact with TMEFF1. Interacts with iripin-3, a serine protease inhibitor from Ixodes ricinus saliva. Interacts with iripin-1, a serine protease inhibitor from Ixodes ricinus saliva.

It is found in the membrane. It catalyses the reaction Cleaves various synthetic substrates with Arg or Lys at the P1 position and prefers small side-chain amino acids, such as Ala and Gly, at the P2 position.. Its function is as follows. Exhibits trypsin-like activity as defined by cleavage of synthetic substrates with Arg or Lys as the P1 site. Involved in the terminal differentiation of keratinocytes through prostasin (PRSS8) activation and filaggrin (FLG) processing. Proteolytically cleaves and therefore activates TMPRSS13. The protein is Suppressor of tumorigenicity 14 protein (ST14) of Homo sapiens (Human).